The chain runs to 575 residues: Regulatory protein zeste (575 aa).

Residues 1–26 (MSAQGEGGGAGGSGGGGAGSDGGGNA) are compositionally biased toward gly residues. Disordered stretches follow at residues 1–53 (MSAQ…LPLT) and 151–174 (SVAS…VKVE). Residues 2–47 (SAQGEGGGAGGSGGGGAGSDGGGNAGQSSTGSGTVAVTNGGNSSAK) are hydrophobic. The span at 31 to 51 (TGSGTVAVTNGGNSSAKNQLP) shows a compositional bias: polar residues. A DNA-binding region spans residues 48 to 128 (NQLPLTPRFT…WLNSRLRKQY (81 aa)). Residues 151–164 (SVASAVPQQQQQQH) are compositionally biased toward low complexity.

As to quaternary structure, self-associates forming complexes of several hundred monomers.

It is found in the nucleus. In terms of biological role, involved in transvection phenomena (= synapsis-dependent gene expression), where the synaptic pairing of chromosomes carrying genes with which zeste interacts influences the expression of these genes. Zeste binds to DNA and stimulates transcription from a nearby promoter. The polypeptide is Regulatory protein zeste (z) (Drosophila melanogaster (Fruit fly)).